The primary structure comprises 272 residues: Putative hydro-lyase AZC_4080 (272 aa).

This sequence belongs to the D-glutamate cyclase family.

The polypeptide is Putative hydro-lyase AZC_4080 (Azorhizobium caulinodans (strain ATCC 43989 / DSM 5975 / JCM 20966 / LMG 6465 / NBRC 14845 / NCIMB 13405 / ORS 571)).